We begin with the raw amino-acid sequence, 989 residues long: Clumping factor A (989 aa).

The first 39 residues, 1 to 39 (MNMKKKEKHAIRKKSIGVASVLVGTLIGFGLLSSKEADA), serve as a signal peptide directing secretion. Positions 9–20 (HAIRKKSIGVAS) match the YSIRK-G/S signaling motif motif. Disordered stretches follow at residues 34–205 (SKEA…VSQA) and 529–960 (FNNG…SEDE). The tract at residues 40–542 (SENSVTQSDS…SGSGDGIDKP (503 aa)) is ligand binding A region. Residues 47–65 (SDSASNESKSNDSSSVSAA) are compositionally biased toward low complexity. The segment covering 71-105 (TNVSDTKTSSNTNNGETSVAQNPAQQETTQSSSTN) has biased composition (polar residues). 2 stretches are compositionally biased toward low complexity: residues 106–132 (ATTEETPVTGEATTTTTNQANTPATTQ) and 143–162 (NQTSNETTSNDTNTVSSVNS). Over residues 163–205 (PQNSTNAENVSTTQDTSTEATPSNNESAPQNTDASNKDVVSQA) the composition is skewed to polar residues. Over residues 547–565 (QPDEPGEIEPIPEDSDSDP) the composition is skewed to acidic residues. The segment covering 566–598 (GSDSGSDSNSDSGSDSGSDSTSDSGSDSASDSD) has biased composition (low complexity). The span at 599–917 (SASDSDSASD…DNDSDSDSNS (319 aa)) shows a compositional bias: acidic residues. The span at 918–936 (DSESGSNNNVVPPNSPKNG) shows a compositional bias: low complexity. The span at 943 to 952 (NEAKDSKEPL) shows a compositional bias: basic and acidic residues. The LPXTG sorting signal signature appears at 952-956 (LPDTG). Residue T955 is modified to Pentaglycyl murein peptidoglycan amidated threonine. A propeptide spans 956–989 (GSEDEANTSLIWGLLASLGSLLLFRRKKENKDKK) (removed by sortase).

This sequence belongs to the serine-aspartate repeat-containing protein (SDr) family.

The protein resides in the secreted. The protein localises to the cell wall. Cell surface-associated protein implicated in virulence. Promotes bacterial attachment exclusively to the gamma-chain of human fibrinogen. Induces formation of bacterial clumps, which diminish the ability of group IIA phospholipase A2 to cause bacterial phospholipid hydrolysis and killing. Significantly decreases macrophage phagocytosis possibly thanks to the clumps, clumped bacteria being too large to be phagocytosed. Dominant factor responsible for human platelet aggregation, which may be an important mechanism for initiating infective endocarditis. This Staphylococcus aureus (strain N315) protein is Clumping factor A (clfA).